Here is a 376-residue protein sequence, read N- to C-terminus: Homeobox protein extradenticle (376 aa).

The tract at residues 16–35 (APQGYSLSGQDDGQNTGNEN) is disordered. Residues 20–34 (YSLSGQDDGQNTGNE) are compositionally biased toward polar residues. Positions 38 to 237 (RKQKDIGEIL…VMILRSRFLD (200 aa)) constitute a PBC domain. The PBC-A stretch occupies residues 45–124 (EILQQIMSIS…EGVAGPEKGG (80 aa)). The interval 127 to 237 (AAAASAAAAS…VMILRSRFLD (111 aa)) is PBC-B. The homeobox; TALE-type DNA-binding region spans 238-300 (ARRKRRNFSK…NKRIRYKKNI (63 aa)). The span at 318–335 (ASPYSMAGPPSGTTTPMM) shows a compositional bias: low complexity. The tract at residues 318 to 376 (ASPYSMAGPPSGTTTPMMSPAPPQDSMGYTMGSGGYDQQQPYDNSMGGYDPNLHQDLSP) is disordered.

The protein belongs to the TALE/PBX homeobox family. As to quaternary structure, interacts with Ubx and hth.

It is found in the nucleus. Its function is as follows. Transcription factor which acts with the selector homeodomain proteins altering the regulation of downstream target genes such as wingless (wg), teashirt (tsh) and decapentaplegic (dpp), thus affecting segmental identity. Delimits the eye field and prevent inappropriate eye development. Required for proper localization of chordotonal organs within the peripheral nervous system. In Drosophila pseudoobscura pseudoobscura (Fruit fly), this protein is Homeobox protein extradenticle.